Consider the following 1887-residue polypeptide: Protein TIC 214 (1887 aa).

The next 6 membrane-spanning stretches (helical) occupy residues 18–38 (IINSVVVVGLYYGFLTTFSIG), 64–84 (FITGQLMMFISIYYAPLHLAL), 87–107 (PHTITVLALPYLLFHFFWNNH), 124–144 (LSIQCVFLNNLIFQLFNHFIL), 172–192 (VGWLIGHILFMKWLGLVLVWI), and 221–241 (IFSILLFITCVYYLGRIPSPI). Disordered stretches follow at residues 248 to 300 (EASK…EGWD), 785 to 805 (REEQTKREEKKEKDKKEDNKR), and 1569 to 1603 (LPSNKKIKNRSQETKEPPSQRERGSDIENKGNLSP). Residues 256-268 (VESEEERDVEIET) show a composition bias toward acidic residues. Residues 1578-1597 (RSQETKEPPSQRERGSDIEN) show a composition bias toward basic and acidic residues.

It belongs to the TIC214 family. Part of the Tic complex.

Its subcellular location is the plastid. The protein resides in the chloroplast inner membrane. Functionally, involved in protein precursor import into chloroplasts. May be part of an intermediate translocation complex acting as a protein-conducting channel at the inner envelope. The polypeptide is Protein TIC 214 (Solanum tuberosum (Potato)).